A 158-amino-acid chain; its full sequence is SsrA-binding protein (158 aa).

A disordered region spans residues 135 to 158 (DKRKTLKDRDWERDKQRGFKKDLD). Positions 141-158 (KDRDWERDKQRGFKKDLD) are enriched in basic and acidic residues.

The protein belongs to the SmpB family.

The protein localises to the cytoplasm. Functionally, required for rescue of stalled ribosomes mediated by trans-translation. Binds to transfer-messenger RNA (tmRNA), required for stable association of tmRNA with ribosomes. tmRNA and SmpB together mimic tRNA shape, replacing the anticodon stem-loop with SmpB. tmRNA is encoded by the ssrA gene; the 2 termini fold to resemble tRNA(Ala) and it encodes a 'tag peptide', a short internal open reading frame. During trans-translation Ala-aminoacylated tmRNA acts like a tRNA, entering the A-site of stalled ribosomes, displacing the stalled mRNA. The ribosome then switches to translate the ORF on the tmRNA; the nascent peptide is terminated with the 'tag peptide' encoded by the tmRNA and targeted for degradation. The ribosome is freed to recommence translation, which seems to be the essential function of trans-translation. The polypeptide is SsrA-binding protein (Psychrobacter cryohalolentis (strain ATCC BAA-1226 / DSM 17306 / VKM B-2378 / K5)).